The sequence spans 446 residues: Iron-sulfur cluster assembly SufBD family protein PH1385 (446 aa).

The protein belongs to the iron-sulfur cluster assembly SufBD family.

The protein is Iron-sulfur cluster assembly SufBD family protein PH1385 of Pyrococcus horikoshii (strain ATCC 700860 / DSM 12428 / JCM 9974 / NBRC 100139 / OT-3).